The primary structure comprises 149 residues: Transcriptional regulator MraZ (149 aa).

SpoVT-AbrB domains lie at 6-52 and 81-124; these read HAHR…TPPD and SEEV…DKRE.

Belongs to the MraZ family. In terms of assembly, forms oligomers.

It is found in the cytoplasm. It localises to the nucleoid. This chain is Transcriptional regulator MraZ, found in Maridesulfovibrio salexigens (strain ATCC 14822 / DSM 2638 / NCIMB 8403 / VKM B-1763) (Desulfovibrio salexigens).